The sequence spans 348 residues: N-formyl peptide receptor 2 (348 aa).

An N-linked (GlcNAc...) asparagine glycan is attached at N1. Residues 1–24 are Extracellular-facing; that stretch reads NFSTPLNEHEEVSYESAGYTVLQI. A helical membrane pass occupies residues 25–47; it reads LPLVVLGVTFVLGVLGNGLVIWV. Topologically, residues 48–58 are cytoplasmic; sequence AGFRMTRTVTT. Residues 59–80 form a helical membrane-spanning segment; it reads ICYLNLPLADFSFTATLPFLIV. Residues 81–97 are Extracellular-facing; the sequence is SMAMGEKWPFGWFLCKL. A disulfide bridge links C95 with C173. A helical membrane pass occupies residues 98-118; sequence IHIVVDINLFGSVFLIGFIAL. The Cytoplasmic portion of the chain corresponds to 119–137; it reads DRCICVLHPVWAQNHRTVS. The chain crosses the membrane as a helical span at residues 138–159; the sequence is LAMKVIIGPWILALVLTLPVFL. Topologically, residues 160 to 202 are extracellular; the sequence is FLTTVTIPNGDTYCTFNFASWGGTPEERKNVAITMLTARGIIR. A helical membrane pass occupies residues 203–223; sequence FVIGFSMPMSIVAICYGLIAA. Over 224-239 the chain is Cytoplasmic; that stretch reads KIHKKGMIKSSRPLRV. Residues 240 to 263 form a helical membrane-spanning segment; it reads LTAVVASFFICWFPFQLVALLSTV. Residues 264–283 are Extracellular-facing; the sequence is WLKEMLFYGKYKIINILVNP. A helical membrane pass occupies residues 284–303; sequence TSSLAFFNSCLNPMLYVFVG. Residues 304–348 lie on the Cytoplasmic side of the membrane; sequence QDFRERLIRSLPTSLERALSEDSAPTNDTAAKCASPPAETELQAM. Positions 323-348 are disordered; it reads SEDSAPTNDTAAKCASPPAETELQAM.

This sequence belongs to the G-protein coupled receptor 1 family. Interacts with APP; the interaction takes place at the cell surface and the complex is then rapidly internalized.

It is found in the cell membrane. Low affinity receptor for N-formyl-methionyl peptides, which are powerful neutrophil chemotactic factors. Binding of FMLP to the receptor causes activation of neutrophils. This response is mediated via a G-protein that activates a phosphatidylinositol-calcium second messenger system. Receptor for the chemokine-like protein FAM19A5, mediating FAM19A5-stimulated macrophage chemotaxis and the inhibitory effect on TNFSF11/RANKL-induced osteoclast differentiation. In Pongo pygmaeus (Bornean orangutan), this protein is N-formyl peptide receptor 2 (FPR2).